Reading from the N-terminus, the 523-residue chain is Calcium and calcium/calmodulin-dependent serine/threonine-protein kinase DMI-3 (523 aa).

In terms of domain architecture, Protein kinase spans 12-306 (YEVSEILGRG…ALELLSDPWV (295 aa)). ATP contacts are provided by residues 18–26 (LGRGGFSVV) and lysine 47. The active-site Proton acceptor is the aspartate 171. Threonine 271 is subject to Phosphothreonine. Residues 329-342 (ARRKLRAAAIASVW) form a calmodulin-binding region. EF-hand domains lie at 400-435 (SLIPFASRIFDLFDNNRDGTVDMREILCGFSSLKNS), 436-471 (KGEDALRLCFQMYDTDRSGCISKEEVASMLRALPYD), and 478-513 (TEPGKLDEIFDLMDANNDGKVTFDEFKAAMQRDSSL). Ca(2+) is bound by residues aspartate 413, asparagine 415, aspartate 417, threonine 419, glutamate 424, aspartate 449, aspartate 451, serine 453, cysteine 455, glutamate 460, aspartate 491, asparagine 493, aspartate 495, lysine 497, and glutamate 502.

It belongs to the protein kinase superfamily. CAMK Ser/Thr protein kinase family. CaMK subfamily. In terms of assembly, interacts with IPD3. In terms of processing, autophosphorylation. As to expression, highly expressed in roots. Expressed in root hairs and nodules. Expressed at low levels in flowers. Not detected in leaves or stems.

It localises to the nucleus. It catalyses the reaction L-seryl-[protein] + ATP = O-phospho-L-seryl-[protein] + ADP + H(+). The catalysed reaction is L-threonyl-[protein] + ATP = O-phospho-L-threonyl-[protein] + ADP + H(+). Activated by calcium. Autophosphorylation may play an important role in the regulation of the kinase activity. Functionally, during nodulation, plays a central role in bacterial infection and contributes to nodule organogenesis. Protein kinase that recognizes the calcium spiking induced by Nod factors and translates this signal to components controlling nodulation and mycorrhizal infection responses. May phosphorylate the NSP1 protein. Required in epidermal and cortical cells to promote infection thread (IT) formation in root hairs. This chain is Calcium and calcium/calmodulin-dependent serine/threonine-protein kinase DMI-3, found in Medicago truncatula (Barrel medic).